An 89-amino-acid polypeptide reads, in one-letter code: Large ribosomal subunit protein bL28 (89 aa).

It belongs to the bacterial ribosomal protein bL28 family.

The polypeptide is Large ribosomal subunit protein bL28 (Chlamydia trachomatis serovar A (strain ATCC VR-571B / DSM 19440 / HAR-13)).